The sequence spans 430 residues: Adenylosuccinate synthetase (430 aa).

GTP is bound by residues Gly13–Lys19 and Gly41–Thr43. The active-site Proton acceptor is the Asp14. Mg(2+) is bound by residues Asp14 and Gly41. Residues Asp14 to Lys17, Asn39 to His42, Thr130, Arg144, Gln225, Thr240, and Arg304 each bind IMP. Catalysis depends on His42, which acts as the Proton donor. Ala300–Arg306 is a substrate binding site. GTP contacts are provided by residues Arg306, Lys332 to Asp334, and Ser414 to Gly416.

This sequence belongs to the adenylosuccinate synthetase family. In terms of assembly, homodimer. The cofactor is Mg(2+).

The protein localises to the cytoplasm. The catalysed reaction is IMP + L-aspartate + GTP = N(6)-(1,2-dicarboxyethyl)-AMP + GDP + phosphate + 2 H(+). Its pathway is purine metabolism; AMP biosynthesis via de novo pathway; AMP from IMP: step 1/2. Functionally, plays an important role in the de novo pathway of purine nucleotide biosynthesis. Catalyzes the first committed step in the biosynthesis of AMP from IMP. The protein is Adenylosuccinate synthetase of Xanthomonas campestris pv. campestris (strain 8004).